The chain runs to 181 residues: Inner membrane-spanning protein YciB (181 aa).

5 consecutive transmembrane segments (helical) span residues 10–30 (LIIF…GALI), 50–70 (MHLI…VFHD), 72–92 (AFIK…LGVS), 118–138 (VTWY…YVAF), and 148–168 (FKVF…VFYL).

This sequence belongs to the YciB family.

The protein resides in the cell inner membrane. Functionally, plays a role in cell envelope biogenesis, maintenance of cell envelope integrity and membrane homeostasis. In Shewanella sp. (strain MR-4), this protein is Inner membrane-spanning protein YciB.